Reading from the N-terminus, the 423-residue chain is MLDVKRIRNNPEAVRIAIELKGEKADIDRFLELDEKRRQMLVELETLKNRRNVESDNIAKLKREGKDASDLIAEMKELSDKIKEMEQEVKEVEEELERILWTIPNIPHESVPIGDSDEDNVEIRRWGEPRKFDFEPKPHWEIGQELDILDFEAAARVTGSRFTFYKGLGARLERALINFMLDLHIEKHGYTEVFPPFMVHRRSMFGTGQLPKFEEDAFKVYGTDYFLIPTAEVPVTNMYRDTIIDGDKLPIYHCAYSACFRQEAGSAGRDTRGLIRQHQFNKVELVKFTEPDKSYEELEKMTRDAEEVLQALGLPYRVVVICTGDLGFTASKKYDIEVWMPSYGRYVEISSCSNCEDFQARRANIKYRPKDGGKAQYVHTLNGSGVAVGRTFAAILENYQQEDGSVVIPEVLRPYMKVDVIKK.

An L-serine-binding site is contributed by 230–232 (TAE). Residue 261–263 (RQE) participates in ATP binding. Glutamate 284 is a binding site for L-serine. 348–351 (EISS) is a binding site for ATP. An L-serine-binding site is contributed by serine 384.

Belongs to the class-II aminoacyl-tRNA synthetase family. Type-1 seryl-tRNA synthetase subfamily. In terms of assembly, homodimer. The tRNA molecule binds across the dimer.

The protein resides in the cytoplasm. It carries out the reaction tRNA(Ser) + L-serine + ATP = L-seryl-tRNA(Ser) + AMP + diphosphate + H(+). The catalysed reaction is tRNA(Sec) + L-serine + ATP = L-seryl-tRNA(Sec) + AMP + diphosphate + H(+). The protein operates within aminoacyl-tRNA biosynthesis; selenocysteinyl-tRNA(Sec) biosynthesis; L-seryl-tRNA(Sec) from L-serine and tRNA(Sec): step 1/1. Its function is as follows. Catalyzes the attachment of serine to tRNA(Ser). Is also able to aminoacylate tRNA(Sec) with serine, to form the misacylated tRNA L-seryl-tRNA(Sec), which will be further converted into selenocysteinyl-tRNA(Sec). The polypeptide is Serine--tRNA ligase (Thermoanaerobacter pseudethanolicus (strain ATCC 33223 / 39E) (Clostridium thermohydrosulfuricum)).